The primary structure comprises 513 residues: ATP synthase subunit alpha (513 aa).

169–176 provides a ligand contact to ATP; the sequence is GDRQTGKT.

This sequence belongs to the ATPase alpha/beta chains family. In terms of assembly, F-type ATPases have 2 components, CF(1) - the catalytic core - and CF(0) - the membrane proton channel. CF(1) has five subunits: alpha(3), beta(3), gamma(1), delta(1), epsilon(1). CF(0) has three main subunits: a(1), b(2) and c(9-12). The alpha and beta chains form an alternating ring which encloses part of the gamma chain. CF(1) is attached to CF(0) by a central stalk formed by the gamma and epsilon chains, while a peripheral stalk is formed by the delta and b chains.

The protein localises to the cell inner membrane. The catalysed reaction is ATP + H2O + 4 H(+)(in) = ADP + phosphate + 5 H(+)(out). Its function is as follows. Produces ATP from ADP in the presence of a proton gradient across the membrane. The alpha chain is a regulatory subunit. This chain is ATP synthase subunit alpha, found in Klebsiella pneumoniae subsp. pneumoniae (strain ATCC 700721 / MGH 78578).